Consider the following 162-residue polypeptide: Caveolin-2 (162 aa).

The Cytoplasmic portion of the chain corresponds to Met1–Lys86. Phosphotyrosine; by SRC is present on Tyr19. A phosphoserine mark is found at Ser20 and Ser23. Tyr27 is subject to Phosphotyrosine. Position 36 is a phosphoserine (Ser36). The segment at residues Phe87–Leu107 is an intramembrane region (helical). Over Ser108–Asp162 the chain is Cytoplasmic.

The protein belongs to the caveolin family. In terms of assembly, monomer or homodimer. Interacts with CAV1; the interaction forms a stable heterooligomeric complex that is required for targeting to lipid rafts and for caveolae formation. Tyrosine phosphorylated forms do not form heterooligomers with the Tyr-19-phosphorylated form existing as a monomer or dimer, and the Tyr-27-form as a monomer only. Interacts (tyrosine phosphorylated form) with the SH2 domain-containing proteins, RASA1, NCK1 and SRC. Interacts (tyrosine phosphorylated form) with INSR, the interaction (Tyr-27-phosphorylated form) is increased on insulin stimulation. Interacts (Tyr-19 phosphorylated form) with MAPK1 (phosphorylated form); the interaction, promoted by insulin, leads to nuclear location and MAPK1 activation. Interacts with STAT3; the interaction is increased on insulin-induced tyrosine phosphorylation leading to STAT activation. In terms of processing, phosphorylated on serine and tyrosine residues. CAV1 promotes phosphorylation on Ser-23 which then targets the complex to the plasma membrane, lipid rafts and caveolae. Phosphorylation on Ser-36 appears to modulate mitosis in endothelial cells. Phosphorylation on both Tyr-19 and Tyr-27 is required for insulin-induced 'Ser-727' phosphorylation of STAT3 and its activation. Phosphorylation on Tyr-19 is required for insulin-induced phosphorylation of MAPK1 and DNA binding of STAT3. Tyrosine phosphorylation is induced by both EGF and insulin.

It localises to the nucleus. The protein localises to the cytoplasm. It is found in the golgi apparatus membrane. The protein resides in the cell membrane. Its subcellular location is the membrane. It localises to the caveola. Its function is as follows. May act as a scaffolding protein within caveolar membranes. Interacts directly with G-protein alpha subunits and can functionally regulate their activity. Acts as an accessory protein in conjunction with CAV1 in targeting to lipid rafts and driving caveolae formation. The Ser-36 phosphorylated form has a role in modulating mitosis in endothelial cells. Positive regulator of cellular mitogenesis of the MAPK signaling pathway. Required for the insulin-stimulated nuclear translocation and activation of MAPK1 and STAT3, and the subsequent regulation of cell cycle progression. This Mus musculus (Mouse) protein is Caveolin-2 (Cav2).